Consider the following 727-residue polypeptide: FACT complex subunit Ssrp1 (727 aa).

Disordered stretches follow at residues 458 to 565 (AEAR…AFML) and 596 to 727 (ELKD…EGSD). 2 stretches are compositionally biased toward acidic residues: residues 464-479 (EEED…ESTD) and 487-508 (NESD…DDSD). Positions 510–519 (SGGGGDGGTD) are enriched in gly residues. 3 stretches are compositionally biased toward basic and acidic residues: residues 529–555 (KKNE…DTGK), 596–620 (ELKD…EMRN), and 675–703 (DQEK…KSES). A DNA-binding region (HMG box) is located at residues 556 to 622 (PKRGTSAFML…RYQEEMRNYK (67 aa)). Positions 704 to 727 (EGGDSDDASNASEDDDEEEDEGSD) are enriched in acidic residues.

This sequence belongs to the SSRP1 family. As to quaternary structure, component of the FACT complex, a stable heterodimer of dre4/spt16 and Ssrp.

The protein resides in the nucleus. It localises to the chromosome. It is found in the nucleolus. In terms of biological role, component of the FACT complex, a general chromatin factor that acts to reorganize nucleosomes. The FACT complex is involved in multiple processes that require DNA as a template such as mRNA elongation, DNA replication and DNA repair. During transcription elongation the FACT complex acts as a histone chaperone that both destabilizes and restores nucleosomal structure. It facilitates the passage of RNA polymerase II and transcription by promoting the dissociation of one histone H2A-H2B dimer from the nucleosome, then subsequently promotes the reestablishment of the nucleosome following the passage of RNA polymerase II. Binds specifically to single-stranded DNA and RNA with highest affinity for nucleotides G and U. The FACT complex is required for expression of Hox genes. This Drosophila pseudoobscura pseudoobscura (Fruit fly) protein is FACT complex subunit Ssrp1 (Ssrp).